The chain runs to 416 residues: Probable endo-beta-1,4-glucanase celB (416 aa).

The signal sequence occupies residues 1-17; sequence MIWTLAPFVALLPLVTA. Asn-45, Asn-104, Asn-117, and Asn-135 each carry an N-linked (GlcNAc...) asparagine glycan. Catalysis depends on Glu-214, which acts as the Nucleophile. Glu-219 (proton donor) is an active-site residue. Asn-233, Asn-278, Asn-292, and Asn-382 each carry an N-linked (GlcNAc...) asparagine glycan.

Belongs to the glycosyl hydrolase 7 (cellulase C) family.

The protein resides in the secreted. The enzyme catalyses Endohydrolysis of (1-&gt;4)-beta-D-glucosidic linkages in cellulose, lichenin and cereal beta-D-glucans.. Has endoglucanase activity on substrates containing beta-1,4 glycosidic bonds, like in carboxymethylcellulose (CMC), hydroxyethylcellulose (HEC) and beta-glucan. Involved in the degradation of complex natural cellulosic substrates. The sequence is that of Probable endo-beta-1,4-glucanase celB (celB) from Aspergillus flavus (strain ATCC 200026 / FGSC A1120 / IAM 13836 / NRRL 3357 / JCM 12722 / SRRC 167).